Reading from the N-terminus, the 533-residue chain is Retinoid isomerohydrolase (533 aa).

At S2 the chain carries N-acetylserine. A phosphothreonine mark is found at T101 and T105. C112 is lipidated: S-palmitoyl cysteine; in membrane form. K113 carries the N6-acetyllysine modification. Position 117 is a phosphoserine (S117). H180 contacts Fe cation. C231 carries the S-palmitoyl cysteine; in membrane form lipid modification. Positions 241 and 313 each coordinate Fe cation. Residues C329 and C330 are each lipidated (S-palmitoyl cysteine; in membrane form). H527 serves as a coordination point for Fe cation.

It belongs to the carotenoid oxygenase family. As to quaternary structure, interacts with MYO7A; this mediates light-dependent intracellular transport of RPE65. Fe(2+) is required as a cofactor. In terms of processing, palmitoylation by LRAT regulates ligand binding specificity; the palmitoylated form (membrane form) specifically binds all-trans-retinyl-palmitate, while the soluble unpalmitoylated form binds all-trans-retinol (vitamin A). As to expression, retinal pigment epithelium specific.

The protein localises to the cytoplasm. Its subcellular location is the cell membrane. The protein resides in the microsome membrane. The catalysed reaction is an all-trans-retinyl ester + H2O = 11-cis-retinol + a fatty acid + H(+). The enzyme catalyses lutein = (3R,3'S)-zeaxanthin. It catalyses the reaction all-trans-retinyl hexadecanoate + H2O = 11-cis-retinol + hexadecanoate + H(+). Its function is as follows. Critical isomerohydrolase in the retinoid cycle involved in regeneration of 11-cis-retinal, the chromophore of rod and cone opsins. Catalyzes the cleavage and isomerization of all-trans-retinyl fatty acid esters to 11-cis-retinol which is further oxidized by 11-cis retinol dehydrogenase to 11-cis-retinal for use as visual chromophore. Essential for the production of 11-cis retinal for both rod and cone photoreceptors. Also capable of catalyzing the isomerization of lutein to meso-zeaxanthin an eye-specific carotenoid. The soluble form binds vitamin A (all-trans-retinol), making it available for LRAT processing to all-trans-retinyl ester. The membrane form, palmitoylated by LRAT, binds all-trans-retinyl esters, making them available for IMH (isomerohydrolase) processing to all-cis-retinol. The soluble form is regenerated by transferring its palmitoyl groups onto 11-cis-retinol, a reaction catalyzed by LRAT. The sequence is that of Retinoid isomerohydrolase (RPE65) from Chlorocebus aethiops (Green monkey).